The sequence spans 199 residues: NAD(P)H dehydrogenase (quinone) (199 aa).

One can recognise a Flavodoxin-like domain in the interval 4–190; that stretch reads VLVLYYSSYG…AMARFQGGHV (187 aa). FMN contacts are provided by residues 10 to 15 and 78 to 80; these read SSYGHI and TRF. NAD(+) is bound at residue tyrosine 12. Residue tryptophan 98 participates in substrate binding. Residues 113 to 119 and histidine 134 each bind FMN; that span reads STATQHG.

It belongs to the WrbA family. It depends on FMN as a cofactor.

It catalyses the reaction a quinone + NADH + H(+) = a quinol + NAD(+). It carries out the reaction a quinone + NADPH + H(+) = a quinol + NADP(+). In Azoarcus sp. (strain BH72), this protein is NAD(P)H dehydrogenase (quinone).